The primary structure comprises 131 residues: Lysosomal enzyme trafficking factor (131 aa).

2 consecutive transmembrane segments (helical) span residues 8–28 and 66–86; these read MGWIGVSLYLFVSAAAFYYVF and LPFWLWAALFLIPYFQVFLFL.

This sequence belongs to the LYSET family.

The protein resides in the golgi apparatus membrane. Its function is as follows. Required for mannose-6-phosphate-dependent trafficking of lysosomal enzymes. LYSET bridges GlcNAc-1-phosphate transferase (GNPTAB), to the membrane-bound transcription factor site-1 protease (MBTPS1), thus allowing proteolytic activation of the GNPTAB. GNPTAB is involved in the regulation of M6P-dependent Golgi-to-lysosome trafficking of lysosomal enzymes. LYSET is thus an essential factor for maturation and delivery of lysosomal hydrolases. This Xenopus laevis (African clawed frog) protein is Lysosomal enzyme trafficking factor (lyset-b).